Here is a 216-residue protein sequence, read N- to C-terminus: Uracil phosphoribosyltransferase (216 aa).

5-phospho-alpha-D-ribose 1-diphosphate is bound by residues Arg85, Arg110, and 135–143; that span reads DPMVATGYS. Uracil-binding positions include Ile200 and 205 to 207; that span reads GDA. Asp206 is a 5-phospho-alpha-D-ribose 1-diphosphate binding site.

It belongs to the UPRTase family. Mg(2+) serves as cofactor.

It carries out the reaction UMP + diphosphate = 5-phospho-alpha-D-ribose 1-diphosphate + uracil. Its pathway is pyrimidine metabolism; UMP biosynthesis via salvage pathway; UMP from uracil: step 1/1. With respect to regulation, allosterically activated by GTP. Catalyzes the conversion of uracil and 5-phospho-alpha-D-ribose 1-diphosphate (PRPP) to UMP and diphosphate. The polypeptide is Uracil phosphoribosyltransferase (Burkholderia pseudomallei (strain 668)).